The primary structure comprises 193 residues: Segregation and condensation protein B (193 aa).

It belongs to the ScpB family. As to quaternary structure, homodimer. Homodimerization may be required to stabilize the binding of ScpA to the Smc head domains. Component of a cohesin-like complex composed of ScpA, ScpB and the Smc homodimer, in which ScpA and ScpB bind to the head domain of Smc. The presence of the three proteins is required for the association of the complex with DNA.

It is found in the cytoplasm. Its function is as follows. Participates in chromosomal partition during cell division. May act via the formation of a condensin-like complex containing Smc and ScpA that pull DNA away from mid-cell into both cell halves. This is Segregation and condensation protein B from Clostridium botulinum (strain ATCC 19397 / Type A).